Consider the following 216-residue polypeptide: ATP-dependent Clp protease proteolytic subunit (216 aa).

The active-site Nucleophile is S101. The active site involves H126.

The protein belongs to the peptidase S14 family. As to quaternary structure, component of the chloroplastic Clp protease core complex.

It localises to the plastid. The protein localises to the chloroplast stroma. It catalyses the reaction Hydrolysis of proteins to small peptides in the presence of ATP and magnesium. alpha-casein is the usual test substrate. In the absence of ATP, only oligopeptides shorter than five residues are hydrolyzed (such as succinyl-Leu-Tyr-|-NHMec, and Leu-Tyr-Leu-|-Tyr-Trp, in which cleavage of the -Tyr-|-Leu- and -Tyr-|-Trp bonds also occurs).. Its function is as follows. Cleaves peptides in various proteins in a process that requires ATP hydrolysis. Has a chymotrypsin-like activity. Plays a major role in the degradation of misfolded proteins. The polypeptide is ATP-dependent Clp protease proteolytic subunit (Triticum aestivum (Wheat)).